The chain runs to 203 residues: dITP/XTP pyrophosphatase (203 aa).

8–13 (TANKGK) lines the substrate pocket. Mg(2+)-binding residues include Glu41 and Asp70. Asp70 serves as the catalytic Proton acceptor. Substrate is bound by residues Ser71, 153–156 (FGYD), Lys176, and 181–182 (HR).

The protein belongs to the HAM1 NTPase family. Homodimer. Mg(2+) is required as a cofactor.

It catalyses the reaction XTP + H2O = XMP + diphosphate + H(+). It carries out the reaction dITP + H2O = dIMP + diphosphate + H(+). The enzyme catalyses ITP + H2O = IMP + diphosphate + H(+). Pyrophosphatase that catalyzes the hydrolysis of nucleoside triphosphates to their monophosphate derivatives, with a high preference for the non-canonical purine nucleotides XTP (xanthosine triphosphate), dITP (deoxyinosine triphosphate) and ITP. Seems to function as a house-cleaning enzyme that removes non-canonical purine nucleotides from the nucleotide pool, thus preventing their incorporation into DNA/RNA and avoiding chromosomal lesions. The polypeptide is dITP/XTP pyrophosphatase (Listeria innocua serovar 6a (strain ATCC BAA-680 / CLIP 11262)).